The following is a 385-amino-acid chain: Lipid-A-disaccharide synthase (385 aa).

Belongs to the LpxB family.

It catalyses the reaction a lipid X + a UDP-2-N,3-O-bis[(3R)-3-hydroxyacyl]-alpha-D-glucosamine = a lipid A disaccharide + UDP + H(+). It participates in bacterial outer membrane biogenesis; LPS lipid A biosynthesis. In terms of biological role, condensation of UDP-2,3-diacylglucosamine and 2,3-diacylglucosamine-1-phosphate to form lipid A disaccharide, a precursor of lipid A, a phosphorylated glycolipid that anchors the lipopolysaccharide to the outer membrane of the cell. This Xylella fastidiosa (strain M23) protein is Lipid-A-disaccharide synthase.